The primary structure comprises 250 residues: MARYDRAITVFSPDGHLFQVEYALEAVRKGNAAVGVRGTDTVVLAVEKKSTPKLQDSRSARKIVSLDNHIALACAGLKADARVLINKARIECQSHRLTLEDPVTVEYITRYIAGLQQKYTQSGGVRPFGLSTLIVGFDPYSRLPSLYQTDPSGTFSAWKANATGRNSNSIREFLEKNYKESSGQETIKLAIRALLEVVESGGKNIEVAVMTREETGLRQLEEAEIDAIVAKIEAEKAAAEAAKKGPPKET.

K62 participates in a covalent cross-link: Glycyl lysine isopeptide (Lys-Gly) (interchain with G-Cter in ubiquitin).

This sequence belongs to the peptidase T1A family. In terms of assembly, component of the 20S core complex of the 26S proteasome. The 26S proteasome is composed of a core protease (CP), known as the 20S proteasome, capped at one or both ends by the 19S regulatory particle (RP/PA700). The 20S proteasome core is composed of 28 subunits that are arranged in four stacked rings, resulting in a barrel-shaped structure. The two end rings are each formed by seven alpha subunits, and the two central rings are each formed by seven beta subunits. The catalytic chamber with the active sites is on the inside of the barrel.

It localises to the cytoplasm. Its subcellular location is the nucleus. The proteasome is a multicatalytic proteinase complex which is characterized by its ability to cleave peptides with Arg, Phe, Tyr, Leu, and Glu adjacent to the leaving group at neutral or slightly basic pH. The proteasome has an ATP-dependent proteolytic activity. The sequence is that of Proteasome subunit alpha type-7-B (PAD2) from Arabidopsis thaliana (Mouse-ear cress).